A 647-amino-acid polypeptide reads, in one-letter code: RalBP1-associated Eps domain-containing protein 2 (647 aa).

The region spanning Glu-21–Pro-122 is the EH 1 domain. Residues Glu-156–Pro-233 are disordered. Positions Asn-158–Glu-170 are enriched in basic and acidic residues. The span at Pro-221–Gly-230 shows a compositional bias: low complexity. At Ser-239 the chain carries Phosphoserine. The region spanning Gln-268–Phe-359 is the EH 2 domain. The 36-residue stretch at Leu-301–Arg-336 folds into the EF-hand domain. Ca(2+) contacts are provided by Asp-314, Asp-316, Asp-318, and Glu-325. The disordered stretch occupies residues Pro-402–Ala-478. Position 466 is a phosphothreonine (Thr-466). Phosphoserine is present on Ser-480. Residues Pro-492–Glu-568 are disordered. The span at Leu-499–Cys-510 shows a compositional bias: pro residues. The segment at Pro-501 to Leu-647 is interaction with RALBP1. Positions Ser-524 to Thr-539 are enriched in polar residues. An interaction with ASAP1 region spans residues Pro-548 to Leu-647. A coiled-coil region spans residues Ile-599 to Gln-640.

In terms of assembly, interacts with EPN1. Interacts with EPS15 AND EPS15L1. Interacts with RALBP1; can form a ternary complex with activated Ral (RALA or RALB). Interacts with ASAP1; the interaction is direct and this complex can bind paxillin. Also forms a ternary complex with RALBP1 and ASAP1. Interacts with GRB2. In terms of processing, tyrosine-phosphorylated upon stimulation of cells with EGF. Phosphorylation on Tyr-residues induces its association with the EGF receptor probably indirectly through an adapter like GRB2.

It localises to the cytoplasm. Involved in ligand-dependent receptor mediated endocytosis of the EGF and insulin receptors as part of the Ral signaling pathway. By controlling growth factor receptors endocytosis may regulate cell survival. Through ASAP1 may regulate cell adhesion and migration. The polypeptide is RalBP1-associated Eps domain-containing protein 2 (Reps2) (Mus musculus (Mouse)).